We begin with the raw amino-acid sequence, 424 residues long: Glutamate-1-semialdehyde 2,1-aminomutase (424 aa).

K268 is modified (N6-(pyridoxal phosphate)lysine).

It belongs to the class-III pyridoxal-phosphate-dependent aminotransferase family. HemL subfamily. It depends on pyridoxal 5'-phosphate as a cofactor.

Its subcellular location is the cytoplasm. It carries out the reaction (S)-4-amino-5-oxopentanoate = 5-aminolevulinate. The protein operates within porphyrin-containing compound metabolism; protoporphyrin-IX biosynthesis; 5-aminolevulinate from L-glutamyl-tRNA(Glu): step 2/2. This is Glutamate-1-semialdehyde 2,1-aminomutase from Methanosarcina acetivorans (strain ATCC 35395 / DSM 2834 / JCM 12185 / C2A).